Consider the following 378-residue polypeptide: Spermidine/putrescine import ATP-binding protein PotA (378 aa).

One can recognise an ABC transporter domain in the interval 18–248 (VLLSGISKSF…PKNLFVAGFI (231 aa)). 50 to 57 (GPSGCGKT) contacts ATP.

Belongs to the ABC transporter superfamily. Spermidine/putrescine importer (TC 3.A.1.11.1) family. The complex is composed of two ATP-binding proteins (PotA), two transmembrane proteins (PotB and PotC) and a solute-binding protein (PotD).

Its subcellular location is the cell inner membrane. It carries out the reaction ATP + H2O + polyamine-[polyamine-binding protein]Side 1 = ADP + phosphate + polyamineSide 2 + [polyamine-binding protein]Side 1.. Its function is as follows. Part of the ABC transporter complex PotABCD involved in spermidine/putrescine import. Responsible for energy coupling to the transport system. The chain is Spermidine/putrescine import ATP-binding protein PotA from Salmonella typhi.